The following is an 87-amino-acid chain: Acyl-CoA-binding protein (87 aa).

S2 bears the N-acetylserine mark. The ACB domain maps to 2 to 87; sequence SQAEFEKAAE…VEELKKKYGI (86 aa). K8 carries the N6-acetyllysine; alternate modification. K8 is modified (N6-succinyllysine; alternate). An acyl-CoA is bound at residue K14. N6-succinyllysine is present on K17. Residue K19 is modified to N6-acetyllysine. Residue Y29 is modified to Phosphotyrosine. An acyl-CoA-binding positions include 29-33, K51, K55, and Y74; that span reads YSHYK. An N6-acetyllysine modification is found at K51. At K55 the chain carries N6-acetyllysine; alternate. K55 carries the N6-succinyllysine; alternate modification. Position 55 is an N6-(2-hydroxyisobutyryl)lysine; alternate (K55). K55 is subject to N6-malonyllysine; alternate. K77 carries the post-translational modification N6-acetyllysine; alternate. At K77 the chain carries N6-succinyllysine; alternate.

This sequence belongs to the ACBP family. Monomer.

The protein resides in the endoplasmic reticulum. Its subcellular location is the golgi apparatus. Binds medium- and long-chain acyl-CoA esters with very high affinity and may function as an intracellular carrier of acyl-CoA esters. It is also able to displace diazepam from the benzodiazepine (BZD) recognition site located on the GABA type A receptor. It is therefore possible that this protein also acts as a neuropeptide to modulate the action of the GABA receptor. In terms of biological role, DBI(32-86) has antibacterial properties. The chain is Acyl-CoA-binding protein (DBI) from Sus scrofa (Pig).